A 525-amino-acid polypeptide reads, in one-letter code: MANAPVSPVVLVILDGWGYRQEANANAIAAANTPNVDAFFATYPSTLIHTSGKRVGLPDGQMGNSEVGHLNLGAGRVVPQELVRISDAIEDGSFLRNDVLVKVCRETRQAGKKLHLIGLCSDGGVHSHLNHLLGLLDLAKVNGIADVHIHAITDGRDTNTTEGINYLQQIQAHIDKFGVGSISTISGRYFAMDRDRRWDRVKQAYDVMTQNGNLDQRSFAEILQSHYDNGVTDEFIPPVRLKEGAIEPGDGVIFYNFRPDRARQLSYALVDKNFQGFERELIPDLNFVTFTQYDANLPVQVAFAPQNLTKILGEVIADNGLKQFRTAETEKYPHVTYFFNGGLEVAFEGEDRELISSPQVATYDQKPEMSAKAVTDAACQAIEKGIYSLVVINYANPDMVGHTGKLEAAVQAIETVDHCLGRLVATIGKMGGTTLITADHGNAEYMADQNGKSWTAHTTNPVPFILIEGERRKVVGHGADVVLRENGCLADVAPTILDILGIDKPQEMTGQSLIAPAPYAVTRRR.

Residues aspartate 15 and serine 65 each coordinate Mn(2+). Serine 65 (phosphoserine intermediate) is an active-site residue. Residues histidine 126, 156 to 157 (RD), arginine 188, arginine 194, 258 to 261 (RPDR), and lysine 331 contribute to the substrate site. Mn(2+)-binding residues include aspartate 398, histidine 402, aspartate 439, histidine 440, and histidine 457.

It belongs to the BPG-independent phosphoglycerate mutase family. In terms of assembly, monomer. Mn(2+) is required as a cofactor.

The catalysed reaction is (2R)-2-phosphoglycerate = (2R)-3-phosphoglycerate. Its pathway is carbohydrate degradation; glycolysis; pyruvate from D-glyceraldehyde 3-phosphate: step 3/5. In terms of biological role, catalyzes the interconversion of 2-phosphoglycerate and 3-phosphoglycerate. The sequence is that of 2,3-bisphosphoglycerate-independent phosphoglycerate mutase from Picosynechococcus sp. (strain ATCC 27264 / PCC 7002 / PR-6) (Agmenellum quadruplicatum).